A 592-amino-acid polypeptide reads, in one-letter code: MTFRLSRFESPLIEDDGESRASLLGYSPENELYTDVDENRESRFRRFMSFISSSPYDMFLAINEHVESIDWDSKASTIAGPLGNFFTCSLYTARLLQDSLIRPNQQKLDKKRDSFDLSRSEILRKFEYLSQVPKSGVVVTHLNWYWKFLTFLNVALQITVGFLILINLFVAYKFLIGHFQVYSLFYTKTSPRSKNVTKRSLSDLSFKSLEEVTNSSLWTMIRYMFVRKRLIIKDAPKGKYYYQLRKWTPGKFYTALFSAFSPISVIFLLVTEVSFKTALAVIGHQYILFLVLFKRYESRLDDEACLAKAHFEEINEKVIKPKTTIKTQDAMVDATTYGGGAAFFPSFTTTRSHIFQTHAVTGDIITERYNPETRNFEDVENTGRAKNYISQIQGVSHGQQVVSRSKAMNGATARPQFFSRQPSPSKIGTPSIILNYRTSPFSAPTTPTLKPVNGVQNGQSIFRNSPDPSKANSLNCDTSHLSRNNTLSRLRRNSVSPTKSGNYCSASGMRAIHKSNFGADSSVSYSMEAPSNELPFEEVARRGRHPFEITASRDLPAGRSSAVSSRHSSISPFKGNTSFAGRESLDSRPPFR.

Helical transmembrane passes span 151-171 (FLNV…LFVA) and 255-275 (ALFS…EVSF). A disordered region spans residues 547 to 592 (FEITASRDLPAGRSSAVSSRHSSISPFKGNTSFAGRESLDSRPPFR). Over residues 560 to 571 (SSAVSSRHSSIS) the composition is skewed to low complexity.

It belongs to the NUR1 family.

The protein resides in the nucleus membrane. Its function is as follows. Member of a perinuclear network that controls recombination at multiple loci to maintain genome stability. Required for rDNA repeat stability. The polypeptide is Nuclear rim protein 1 (NUR1) (Lachancea thermotolerans (strain ATCC 56472 / CBS 6340 / NRRL Y-8284) (Yeast)).